The sequence spans 625 residues: DNA mismatch repair protein MutL (625 aa).

It belongs to the DNA mismatch repair MutL/HexB family.

This protein is involved in the repair of mismatches in DNA. It is required for dam-dependent methyl-directed DNA mismatch repair. May act as a 'molecular matchmaker', a protein that promotes the formation of a stable complex between two or more DNA-binding proteins in an ATP-dependent manner without itself being part of a final effector complex. The polypeptide is DNA mismatch repair protein MutL (Bacteroides fragilis (strain YCH46)).